Consider the following 44-residue polypeptide: Protein PsbN (44 aa).

Residues 6–26 (FFFTFFLWFLLLSVTGYSVYV) form a helical membrane-spanning segment.

Belongs to the PsbN family.

The protein localises to the plastid. It is found in the chloroplast thylakoid membrane. In terms of biological role, may play a role in photosystem I and II biogenesis. This Chlamydomonas reinhardtii (Chlamydomonas smithii) protein is Protein PsbN.